The primary structure comprises 529 residues: FAD-binding monooxygenase BOA2 (529 aa).

Residues V58–K61, D70–I71, and Y76 each bind FAD. A68–D70 is an NADP(+) binding site. Residues T198 to Q204 and R221 to S222 each bind NADP(+).

The protein belongs to the FAD-binding monooxygenase family. FAD is required as a cofactor.

The protein operates within polyketide biosynthesis. FAD-binding monooxygenase; part of the gene cluster A that mediates the biosynthesis of botcinic acid and its botcinin derivatives, acetate-derived polyketides that contribute to virulence when combined with the sesquiterpene botrydial. Botcinic acid and its derivatives have been shown to induce chlorosis and necrosis during host plant infection, but also have antifungal activities. Two polyketide synthases, BOA6 and BOA9, are involved in the biosynthesis of botcinins. BOA6 mediates the formation of the per-methylated tetraketide core by condensation of four units of malonyl-CoA with one unit of acetyl-CoA, which would be methylated in activated methylene groups to yield a bicyclic acid intermediate that could then either be converted to botrylactone derivatives or lose the starter acetate unit through a retro-Claisen type C-C bond cleavage to yield botcinin derivatives. The second polyketide synthase, BOA9, is probably required for the biosynthesis of the tetraketide side chain of botcinins. The methyltransferase (MT) domain within BOA6 is probably responsible for the incorporation of four methyl groups. The trans-enoyl reductase BOA5 might take over the enoyl reductase function of BOA6 that misses an ER domain. The monooxygenases BOA2, BOA3 and BOA4 might be involved in further hydroxylations at C4, C5 and C8, whereas BOA7, close to BOA9, could potentially be involved in the hydroxylation at C4 in the side chain of botcinins. The polypeptide is FAD-binding monooxygenase BOA2 (Botryotinia fuckeliana (strain B05.10) (Noble rot fungus)).